The primary structure comprises 2325 residues: Otogelin-like protein (2325 aa).

The signal sequence occupies residues 1 to 22; it reads MVPWRALSLPILLVSLRGYVCA. The region spanning 112 to 288 is the VWFD 1 domain; sequence GICKTWGQYH…VLTPDDTKCV (177 aa). 2 cysteine pairs are disulfide-bonded: Cys114-Cys248 and Cys136-Cys287. N-linked (GlcNAc...) asparagine glycosylation is present at Asn425. Residues 472 to 645 enclose the VWFD 2 domain; that stretch reads VQCSVVGDSH…HAWRVSSTCF (174 aa). 3 disulfides stabilise this stretch: Cys474-Cys609, Cys496-Cys644, and Cys518-Cys526. The region spanning 736 to 791 is the TIL 1 domain; it reads CQKGMLYHHCSSLCLRSCTSLSSPEQCKDDCAEGCNCPEGKFYEETLNFCVPIYHC. N-linked (GlcNAc...) asparagine glycans are attached at residues Asn817 and Asn867. The VWFD 3 domain occupies 937-1114; the sequence is AVCTVYGDRH…DLMEALKPCE (178 aa). Cystine bridges form between Cys939–Cys1069, Cys961–Cys1113, and Cys983–Cys990. N-linked (GlcNAc...) asparagine glycosylation occurs at Asn1280. The TIL 2 domain occupies 1366–1418; it reads RYEPCATPCFKTCSDPEALACTFLPPVEGCLPYCPKNMILDETTLKCVHPEDC. The VWFD 4 domain occupies 1506–1695; that stretch reads CRCSMLSELS…SWEIEKSFEV (190 aa). 2 disulfides stabilise this stretch: Cys1508–Cys1655 and Cys1549–Cys1571. Residues Asn1576 and Asn2170 are each glycosylated (N-linked (GlcNAc...) asparagine). Disulfide bonds link Cys2233-Cys2289, Cys2254-Cys2303, Cys2265-Cys2320, and Cys2269-Cys2322. The CTCK domain occupies 2233–2325; sequence CKREERICQK…EPIDCTCQWN (93 aa). Asn2296 carries an N-linked (GlcNAc...) asparagine glycan.

This sequence belongs to the otogelin family.

It localises to the secreted. The chain is Otogelin-like protein (Otogl) from Mus musculus (Mouse).